The primary structure comprises 365 residues: Serine/threonine-protein kinase SAPK6 (365 aa).

One can recognise a Protein kinase domain in the interval 4-260 (YELLKDIGSG…IREIRNHPWF (257 aa)). Residues 10–18 (IGSGNFGVA) and K33 each bind ATP. The Proton acceptor role is filled by D123. The tract at residues 298-365 (VQEAKTPPPS…AHASCDLQKS (68 aa)) is disordered. Positions 317–347 (TEEEEQEDGKNPDDDEGDRDEEEGEEGDSED) are enriched in acidic residues.

It belongs to the protein kinase superfamily. Ser/Thr protein kinase family. Interacts with BZIP46. In terms of processing, may be phosphorylated. As to expression, expressed in leaf blades and leaf sheaths. Expressed in shoots and roots of young seedlings.

It catalyses the reaction L-seryl-[protein] + ATP = O-phospho-L-seryl-[protein] + ADP + H(+). The enzyme catalyses L-threonyl-[protein] + ATP = O-phospho-L-threonyl-[protein] + ADP + H(+). Its activity is regulated as follows. Activated by hyperosmotic stress. In terms of biological role, may play a role in signal transduction of hyperosmotic response. Can phosphorylate ABI5 in vitro. Can phosphorylate BZIP46 in vitro. This Oryza sativa subsp. japonica (Rice) protein is Serine/threonine-protein kinase SAPK6.